The following is a 429-amino-acid chain: 28S rRNA (cytosine-C(5))-methyltransferase (429 aa).

At Gly2 the chain carries N-acetylglycine. The residue at position 167 (Ser167) is a Phosphoserine. Residues 234 to 240 (CAAPGNK), Asp258, Arg263, and Asp305 contribute to the S-adenosyl-L-methionine site. The active-site Nucleophile is Cys359.

It belongs to the class I-like SAM-binding methyltransferase superfamily. RsmB/NOP family. In terms of tissue distribution, ubiquitous. Detected in placenta, heart and skeletal muscle.

The protein resides in the nucleus. It localises to the nucleolus. It carries out the reaction cytidine(3782) in 28S rRNA + S-adenosyl-L-methionine = 5-methylcytidine(3782) in 28S rRNA + S-adenosyl-L-homocysteine + H(+). Functionally, S-adenosyl-L-methionine-dependent methyltransferase that specifically methylates the C(5) position of cytosine 3782 (m5C3782) in 28S rRNA. m5C3782 promotes protein translation without affecting ribosome biogenesis and fidelity. Required for corpus callosum and cerebral cortex development. The sequence is that of 28S rRNA (cytosine-C(5))-methyltransferase from Homo sapiens (Human).